We begin with the raw amino-acid sequence, 156 residues long: PopC secretion inhibitor (156 aa).

The interval 1 to 89 is disordered; it reads MNPGSAPWER…PVRSRAEVHQ (89 aa). Positions 8–28 are enriched in basic and acidic residues; it reads WERRTRERMRAMSRKNGEWGD.

In terms of assembly, interacts with PopC in non-starving cells.

It is found in the cytoplasm. Its activity is regulated as follows. In response to starvation, RelA is activated resulting in the accumulation of (p)ppGpp, which causes the degradation of PopD in an FtsH(D)-dependent manner, thereby releasing pre-formed PopC for secretion. Its function is as follows. Inhibitor of protease PopC. In non-starving cells, forms a cytoplasmic complex with PopC and inhibits PopC secretion and activity. This Myxococcus xanthus (strain DK1622) protein is PopC secretion inhibitor.